The following is a 1460-amino-acid chain: Cilia- and flagella-associated protein 43 (1460 aa).

9 WD repeats span residues 46–87, 91–132, 184–221, 303–342, 428–468, 529–569, 589–628, 911–951, and 1129–1170; these read EGRY…HLQC, VATV…RLVK, SKGH…MKNY, RRRS…AGHT, IFAC…DSAS, MRDH…MKLP, FGRG…IHYS, EIDP…VTEV, and NRRF…CRAV. 2 coiled-coil regions span residues 1170-1214 and 1399-1446; these read VVEA…AEEA and LGEH…LREA.

Belongs to the CFAP43 family.

It is found in the cell projection. Its subcellular location is the cilium. It localises to the flagellum. The protein localises to the cytoplasm. The protein resides in the cytoskeleton. It is found in the flagellum axoneme. Flagellar protein involved in flagellum axoneme organization and function. The sequence is that of Cilia- and flagella-associated protein 43 from Trypanosoma brucei brucei (strain 927/4 GUTat10.1).